A 215-amino-acid chain; its full sequence is Pyrrolidone-carboxylate peptidase (215 aa).

Residues Glu-80, Cys-143, and His-167 contribute to the active site.

It belongs to the peptidase C15 family. Homotetramer.

The protein resides in the cytoplasm. It carries out the reaction Release of an N-terminal pyroglutamyl group from a polypeptide, the second amino acid generally not being Pro.. In terms of biological role, removes 5-oxoproline from various penultimate amino acid residues except L-proline. The polypeptide is Pyrrolidone-carboxylate peptidase (Bacillus cytotoxicus (strain DSM 22905 / CIP 110041 / 391-98 / NVH 391-98)).